A 119-amino-acid chain; its full sequence is Small ribosomal subunit protein uS13m (119 aa).

The protein belongs to the universal ribosomal protein uS13 family. In terms of assembly, part of the small ribosomal subunit.

It localises to the mitochondrion. In terms of biological role, located at the top of the head of the small subunit, it contacts several helices of the small subunit rRNA. The protein is Small ribosomal subunit protein uS13m (RPS13) of Acanthamoeba castellanii (Amoeba).